A 545-amino-acid chain; its full sequence is Phenylalanine--tRNA ligase beta subunit (545 aa).

The 76-residue stretch at F268–P343 folds into the B5 domain. Residues D321, D327, E330, and D331 each coordinate Mg(2+).

It belongs to the phenylalanyl-tRNA synthetase beta subunit family. Type 2 subfamily. Tetramer of two alpha and two beta subunits. Requires Mg(2+) as cofactor.

The protein localises to the cytoplasm. It catalyses the reaction tRNA(Phe) + L-phenylalanine + ATP = L-phenylalanyl-tRNA(Phe) + AMP + diphosphate + H(+). The sequence is that of Phenylalanine--tRNA ligase beta subunit from Saccharolobus islandicus (strain L.S.2.15 / Lassen #1) (Sulfolobus islandicus).